Reading from the N-terminus, the 361-residue chain is Tyrosine--tRNA ligase (361 aa).

Positions 36, 162, 166, 169, and 184 each coordinate L-tyrosine. Positions 236 to 240 match the 'KMSKS' region motif; it reads KMSKS. ATP is bound at residue Lys239.

It belongs to the class-I aminoacyl-tRNA synthetase family. TyrS type 4 subfamily. Homodimer.

It is found in the cytoplasm. The enzyme catalyses tRNA(Tyr) + L-tyrosine + ATP = L-tyrosyl-tRNA(Tyr) + AMP + diphosphate + H(+). Catalyzes the attachment of tyrosine to tRNA(Tyr) in a two-step reaction: tyrosine is first activated by ATP to form Tyr-AMP and then transferred to the acceptor end of tRNA(Tyr). This Saccharolobus islandicus (strain M.14.25 / Kamchatka #1) (Sulfolobus islandicus) protein is Tyrosine--tRNA ligase.